Reading from the N-terminus, the 254-residue chain is Ribosomal RNA small subunit methyltransferase J (254 aa).

S-adenosyl-L-methionine-binding positions include Arg107–Asp108, Glu123–Arg124, and Asp177.

It belongs to the methyltransferase superfamily. RsmJ family.

It is found in the cytoplasm. It catalyses the reaction guanosine(1516) in 16S rRNA + S-adenosyl-L-methionine = N(2)-methylguanosine(1516) in 16S rRNA + S-adenosyl-L-homocysteine + H(+). Specifically methylates the guanosine in position 1516 of 16S rRNA. The protein is Ribosomal RNA small subunit methyltransferase J of Histophilus somni (strain 129Pt) (Haemophilus somnus).